A 147-amino-acid chain; its full sequence is Transthyretin (147 aa).

The signal sequence occupies residues 1–20 (MASFRLLLLCLAGLVFVSEA). Position 30 is a sulfocysteine (Cys-30). Lys-35 lines the L-thyroxine pocket. Glu-62 is subject to 4-carboxyglutamate. Ser-72 carries the post-translational modification Phosphoserine. Glu-74 is a binding site for L-thyroxine. Asn-118 carries N-linked (GlcNAc...) asparagine glycosylation. Ser-137 is an L-thyroxine binding site.

The protein belongs to the transthyretin family. Homotetramer. Dimer of dimers. In the homotetramer, subunits assemble around a central channel that can accommodate two ligand molecules. Interacts with RBP4. Post-translationally, sulfonation of the reactive cysteine Cys-30 enhances the stability of the native conformation of TTR, avoiding misassembly of the protein leading to amyloid formation. In terms of tissue distribution, highly expressed in the choroid plexus.

The protein resides in the secreted. In terms of biological role, thyroid hormone-binding protein. Probably transports thyroxine from the bloodstream to the brain. The sequence is that of Transthyretin (TTR) from Ovis aries (Sheep).